A 1303-amino-acid polypeptide reads, in one-letter code: DNA-directed RNA polymerase subunit beta' (1303 aa).

Zn(2+) is bound by residues Cys60, Cys62, Cys75, and Cys78. Positions 535, 537, and 539 each coordinate Mg(2+). Residues Cys876, Cys953, Cys960, and Cys963 each contribute to the Zn(2+) site.

Belongs to the RNA polymerase beta' chain family. The RNAP catalytic core consists of 2 alpha, 1 beta, 1 beta' and 1 omega subunit. When a sigma factor is associated with the core the holoenzyme is formed, which can initiate transcription. It depends on Mg(2+) as a cofactor. The cofactor is Zn(2+).

It catalyses the reaction RNA(n) + a ribonucleoside 5'-triphosphate = RNA(n+1) + diphosphate. In terms of biological role, DNA-dependent RNA polymerase catalyzes the transcription of DNA into RNA using the four ribonucleoside triphosphates as substrates. The sequence is that of DNA-directed RNA polymerase subunit beta' from Saccharopolyspora erythraea (strain ATCC 11635 / DSM 40517 / JCM 4748 / NBRC 13426 / NCIMB 8594 / NRRL 2338).